Reading from the N-terminus, the 270-residue chain is Glucosamine-6-phosphate deaminase (270 aa).

The active-site Proton acceptor; for enolization step is D72. D141 acts as the For ring-opening step in catalysis. H143 functions as the Proton acceptor; for ring-opening step in the catalytic mechanism. E148 functions as the For ring-opening step in the catalytic mechanism.

The protein belongs to the glucosamine/galactosamine-6-phosphate isomerase family. NagB subfamily. Homohexamer.

It catalyses the reaction alpha-D-glucosamine 6-phosphate + H2O = beta-D-fructose 6-phosphate + NH4(+). Its pathway is amino-sugar metabolism; N-acetylneuraminate degradation; D-fructose 6-phosphate from N-acetylneuraminate: step 5/5. Its activity is regulated as follows. Allosterically activated by N-acetylglucosamine 6-phosphate (GlcNAc6P). Functionally, catalyzes the reversible isomerization-deamination of glucosamine 6-phosphate (GlcN6P) to form fructose 6-phosphate (Fru6P) and ammonium ion. The protein is Glucosamine-6-phosphate deaminase of Photorhabdus laumondii subsp. laumondii (strain DSM 15139 / CIP 105565 / TT01) (Photorhabdus luminescens subsp. laumondii).